The sequence spans 347 residues: NADH-ubiquinone oxidoreductase chain 2 (347 aa).

10 consecutive transmembrane segments (helical) span residues 13–33, 59–79, 96–116, 122–142, 149–169, 178–198, 201–221, 247–267, 274–294, and 323–343; these read IILG…WIGF, YFLT…TNLL, AVMT…FWVP, IPLS…LSVL, VSPT…GWGG, ILAY…AYNP, TLLN…LFMF, IMLS…WMII, ESLL…YFYM, and VPLL…APAL.

It belongs to the complex I subunit 2 family. As to quaternary structure, core subunit of respiratory chain NADH dehydrogenase (Complex I) which is composed of 45 different subunits. Interacts with TMEM242.

The protein localises to the mitochondrion inner membrane. It carries out the reaction a ubiquinone + NADH + 5 H(+)(in) = a ubiquinol + NAD(+) + 4 H(+)(out). Core subunit of the mitochondrial membrane respiratory chain NADH dehydrogenase (Complex I) which catalyzes electron transfer from NADH through the respiratory chain, using ubiquinone as an electron acceptor. Essential for the catalytic activity and assembly of complex I. The protein is NADH-ubiquinone oxidoreductase chain 2 of Megaderma spasma (Lesser false vampire bat).